The sequence spans 229 residues: NADH dehydrogenase [ubiquinone] iron-sulfur protein 8, mitochondrial (229 aa).

Residues methionine 1 to phenylalanine 41 constitute a mitochondrion transit peptide. 4Fe-4S ferredoxin-type domains follow at residues arginine 121 to glutamate 150 and threonine 160 to asparagine 189. 8 residues coordinate [4Fe-4S] cluster: cysteine 130, cysteine 133, cysteine 136, cysteine 140, cysteine 169, cysteine 172, cysteine 175, and cysteine 179.

The protein belongs to the complex I 23 kDa subunit family. In terms of assembly, complex I is composed of about 45 different subunits. This is a component of the iron-sulfur (IP) fragment of the enzyme. The cofactor is [4Fe-4S] cluster. Lowest expression found in storage tissues of tubers. Higher expression in older leaves than younger ones. Highest expression found in flowers.

The protein localises to the mitochondrion inner membrane. It catalyses the reaction a ubiquinone + NADH + 5 H(+)(in) = a ubiquinol + NAD(+) + 4 H(+)(out). Functionally, core subunit of the mitochondrial membrane respiratory chain NADH dehydrogenase (Complex I) that is believed to belong to the minimal assembly required for catalysis. Complex I functions in the transfer of electrons from NADH to the respiratory chain. The immediate electron acceptor for the enzyme is believed to be ubiquinone. May donate electrons to ubiquinone. The protein is NADH dehydrogenase [ubiquinone] iron-sulfur protein 8, mitochondrial of Solanum tuberosum (Potato).